A 353-amino-acid polypeptide reads, in one-letter code: Putative transport protein YrrI (353 aa).

A run of 8 helical transmembrane segments spans residues 8-28 (LLLWVAICLLVLLTVYVFFML), 37-57 (LVIKTIFIPLIISIFISYLLL), 77-97 (IYVLFFGGIGWALYKGVPVLI), 165-185 (FLIAATIPFLVFYMVKDIELM), 220-240 (LLVCLILGVIAGISFWVFGLP), 243-263 (LILGLISGVTNVIPYFGPFIG), 269-289 (LIAMTISVKAVLVVVITVFIL), and 311-331 (VVIMLALLAGGELAGIVGMIL).

This sequence belongs to the autoinducer-2 exporter (AI-2E) (TC 2.A.86) family.

The protein localises to the cell membrane. The chain is Putative transport protein YrrI (yrrI) from Bacillus subtilis (strain 168).